The primary structure comprises 430 residues: Probable FAD-dependent monooxygenase (430 aa).

Residues 1-23 (MGSTSTPPHVLIIGAGITGLALA) form the signal peptide. 9–37 (HVLIIGAGITGLALAQALRKHGVSFAVYE) lines the FAD pocket. Asparagine 130 and asparagine 151 each carry an N-linked (GlcNAc...) asparagine glycan. Residue 307 to 330 (LEDWPTPPKGSWSNLGGTATLVGD) participates in FAD binding.

FAD serves as cofactor.

The sequence is that of Probable FAD-dependent monooxygenase from Arthroderma benhamiae (strain ATCC MYA-4681 / CBS 112371) (Trichophyton mentagrophytes).